Here is a 355-residue protein sequence, read N- to C-terminus: MSVAGRAESLGPPDSFAKRVLVTGGAGFIASHMIVSLVEDYPNYMIINLDKLDYCASLKNLETISNKQNYKFIQGDICDSHFVKLLFETEKIDIVLHFAAQTHVDLSFVRAFEFTYVNVYGTHVLVSAAHEARVEKFIYVSTDEVYGGSLDKEFDESSPKQPTNPYASSKAAAECFVQSYWEQYKFPVVITRSSNVYGPHQYPEKVIPKFISLLQHNRKCCIHGTGLQTRNFLYATDVVEAFLTVLKKGKPGEIYNIGTNFEMSVLQLAKELIQLIKETNSESEMENWVDYVDDRPTNDMRYPMKSEKIHGLGWRPKVPWKEGIKKTIEWYRENFHNWKNAEKALEPFPVQPPFV.

T142 provides a ligand contact to substrate. D143 acts as the Proton donor in catalysis. Residues E144 and Y166 each act as proton acceptor in the active site.

Belongs to the NAD(P)-dependent epimerase/dehydratase family. dTDP-glucose dehydratase subfamily. NAD(+) serves as cofactor.

It catalyses the reaction dTDP-alpha-D-glucose = dTDP-4-dehydro-6-deoxy-alpha-D-glucose + H2O. The sequence is that of dTDP-D-glucose 4,6-dehydratase (TGDS) from Bos taurus (Bovine).